The chain runs to 558 residues: Small ribosomal subunit protein bS1 (558 aa).

S1 motif domains follow at residues 21-87 (GSII…LSRE), 105-171 (SETV…VSRR), 192-260 (GMHV…LGLK), 277-347 (ETKL…LGLK), 364-434 (GVHV…LGIK), and 451-520 (GAII…LTIH).

This sequence belongs to the bacterial ribosomal protein bS1 family.

In terms of biological role, binds mRNA; thus facilitating recognition of the initiation point. It is needed to translate mRNA with a short Shine-Dalgarno (SD) purine-rich sequence. The protein is Small ribosomal subunit protein bS1 (rpsA) of Buchnera aphidicola subsp. Acyrthosiphon pisum (strain APS) (Acyrthosiphon pisum symbiotic bacterium).